A 132-amino-acid polypeptide reads, in one-letter code: uncharacterized protein (132 aa).

WD repeat units follow at residues 14 to 53 (DLQD…LEIL) and 58 to 97 (AHDD…LANV).

This is an uncharacterized protein from Acanthamoeba polyphaga (Amoeba).